We begin with the raw amino-acid sequence, 77 residues long: Small ribosomal subunit protein uS17 (77 aa).

It belongs to the universal ribosomal protein uS17 family. Part of the 30S ribosomal subunit.

One of the primary rRNA binding proteins, it binds specifically to the 5'-end of 16S ribosomal RNA. In Wolbachia sp. subsp. Brugia malayi (strain TRS), this protein is Small ribosomal subunit protein uS17.